Consider the following 136-residue polypeptide: ATP synthase epsilon chain (136 aa).

Belongs to the ATPase epsilon chain family. As to quaternary structure, F-type ATPases have 2 components, CF(1) - the catalytic core - and CF(0) - the membrane proton channel. CF(1) has five subunits: alpha(3), beta(3), gamma(1), delta(1), epsilon(1). CF(0) has three main subunits: a, b and c.

It is found in the cell inner membrane. Produces ATP from ADP in the presence of a proton gradient across the membrane. This chain is ATP synthase epsilon chain, found in Afipia carboxidovorans (strain ATCC 49405 / DSM 1227 / KCTC 32145 / OM5) (Oligotropha carboxidovorans).